A 171-amino-acid chain; its full sequence is Mitochondrial import inner membrane translocase subunit Tim17-A (171 aa).

Cysteines 9 and 78 form a disulfide. 3 consecutive transmembrane segments (helical) span residues C17 to F37, G63 to D77, and V113 to L133. Positions G144–Q171 are disordered. Over residues P151 to P163 the composition is skewed to low complexity.

It belongs to the Tim17/Tim22/Tim23 family. Component of the TIM23 complex at least composed of TIMM23, TIMM17 (TIMM17A or TIMM17B) and TIMM50. The complex interacts with the TIMM44 component of the PAM complex and with DNAJC15. Degraded by YMEL1 downstream of the integrated stress response (ISR).

The protein resides in the mitochondrion inner membrane. In terms of biological role, essential component of the TIM23 complex, a complex that mediates the translocation of transit peptide-containing proteins across the mitochondrial inner membrane. In Homo sapiens (Human), this protein is Mitochondrial import inner membrane translocase subunit Tim17-A (TIMM17A).